The primary structure comprises 277 residues: 2,5-diketo-D-gluconic acid reductase B (277 aa).

Tyr51 acts as the Proton donor in catalysis. His109 serves as a coordination point for substrate. 189-242 (SPLARRSELLTEQLLQELAVVYGVTPTQVVLRWHVQLGSTPIPKSADPDRQREN) serves as a coordination point for NADP(+).

Belongs to the aldo/keto reductase family.

Its subcellular location is the cytoplasm. The catalysed reaction is 2-dehydro-D-gluconate + NADP(+) = 2,5-didehydro-D-gluconate + NADPH + H(+). Catalyzes the reduction of 2,5-diketo-D-gluconic acid (25DKG) to 2-keto-L-gulonic acid (2KLG). 25DKGR-B has higher catalytic efficiency than 25DKGR-A. The polypeptide is 2,5-diketo-D-gluconic acid reductase B (dkgB) (Corynebacterium sp. (strain SHS752001)).